The chain runs to 86 residues: uncharacterized protein (86 aa).

The N-terminal stretch at 1-31 is a signal peptide; that stretch reads MKQKLLLSGLAVSTVGITSYLLKDPSNRQKA. The segment at 46–69 is disordered; that stretch reads PDMETFPVDKAGHPDPQDIEDNKM. The segment covering 55 to 69 has biased composition (basic and acidic residues); sequence KAGHPDPQDIEDNKM.

This is an uncharacterized protein from Bacillus subtilis (strain 168).